A 667-amino-acid polypeptide reads, in one-letter code: tRNA 5-methylaminomethyl-2-thiouridine biosynthesis bifunctional protein MnmC (667 aa).

The tract at residues 1–215 (MKFINGILFN…KREMIRAYFN (215 aa)) is tRNA (mnm(5)s(2)U34)-methyltransferase. Positions 240-667 (IGAGIAGIVT…LIRKLKKGLK (428 aa)) are FAD-dependent cmnm(5)s(2)U34 oxidoreductase.

In the N-terminal section; belongs to the methyltransferase superfamily. tRNA (mnm(5)s(2)U34)-methyltransferase family. This sequence in the C-terminal section; belongs to the DAO family. The cofactor is FAD.

It is found in the cytoplasm. It catalyses the reaction 5-aminomethyl-2-thiouridine(34) in tRNA + S-adenosyl-L-methionine = 5-methylaminomethyl-2-thiouridine(34) in tRNA + S-adenosyl-L-homocysteine + H(+). Its function is as follows. Catalyzes the last two steps in the biosynthesis of 5-methylaminomethyl-2-thiouridine (mnm(5)s(2)U) at the wobble position (U34) in tRNA. Catalyzes the FAD-dependent demodification of cmnm(5)s(2)U34 to nm(5)s(2)U34, followed by the transfer of a methyl group from S-adenosyl-L-methionine to nm(5)s(2)U34, to form mnm(5)s(2)U34. The chain is tRNA 5-methylaminomethyl-2-thiouridine biosynthesis bifunctional protein MnmC from Campylobacter hominis (strain ATCC BAA-381 / DSM 21671 / CCUG 45161 / LMG 19568 / NCTC 13146 / CH001A).